The chain runs to 346 residues: Uroporphyrinogen decarboxylase (346 aa).

Residues 21-25, Asp71, Tyr146, Ser201, and His316 contribute to the substrate site; that span reads RQAGR.

This sequence belongs to the uroporphyrinogen decarboxylase family. In terms of assembly, homodimer.

The protein resides in the cytoplasm. It catalyses the reaction uroporphyrinogen III + 4 H(+) = coproporphyrinogen III + 4 CO2. It participates in porphyrin-containing compound metabolism; protoporphyrin-IX biosynthesis; coproporphyrinogen-III from 5-aminolevulinate: step 4/4. Catalyzes the decarboxylation of four acetate groups of uroporphyrinogen-III to yield coproporphyrinogen-III. The polypeptide is Uroporphyrinogen decarboxylase (Rickettsia africae (strain ESF-5)).